A 546-amino-acid chain; its full sequence is CTP synthase (546 aa).

An amidoligase domain region spans residues 1–266; that stretch reads MTKYIFVTGG…GDYLVERLGL (266 aa). Ser-13 contributes to the CTP binding site. Ser-13 is a UTP binding site. 14 to 19 provides a ligand contact to ATP; that stretch reads SVGKGI. Tyr-54 provides a ligand contact to L-glutamine. Asp-71 serves as a coordination point for ATP. Mg(2+)-binding residues include Asp-71 and Glu-141. CTP is bound by residues 148–150, 187–192, and Lys-223; these read DIE and KTKPTQ. UTP contacts are provided by residues 187-192 and Lys-223; that span reads KTKPTQ. One can recognise a Glutamine amidotransferase type-1 domain in the interval 291–533; it reads PIALVGKYVE…VAAAAQTLLA (243 aa). Position 353 (Gly-353) interacts with L-glutamine. Residue Cys-380 is the Nucleophile; for glutamine hydrolysis of the active site. L-glutamine contacts are provided by residues 381-384, Glu-404, and Arg-461; that span reads LGMQ. Active-site residues include His-506 and Glu-508.

The protein belongs to the CTP synthase family. As to quaternary structure, homotetramer.

The catalysed reaction is UTP + L-glutamine + ATP + H2O = CTP + L-glutamate + ADP + phosphate + 2 H(+). It carries out the reaction L-glutamine + H2O = L-glutamate + NH4(+). The enzyme catalyses UTP + NH4(+) + ATP = CTP + ADP + phosphate + 2 H(+). It functions in the pathway pyrimidine metabolism; CTP biosynthesis via de novo pathway; CTP from UDP: step 2/2. Its activity is regulated as follows. Allosterically activated by GTP, when glutamine is the substrate; GTP has no effect on the reaction when ammonia is the substrate. The allosteric effector GTP functions by stabilizing the protein conformation that binds the tetrahedral intermediate(s) formed during glutamine hydrolysis. Inhibited by the product CTP, via allosteric rather than competitive inhibition. Its function is as follows. Catalyzes the ATP-dependent amination of UTP to CTP with either L-glutamine or ammonia as the source of nitrogen. Regulates intracellular CTP levels through interactions with the four ribonucleotide triphosphates. The polypeptide is CTP synthase (Chloroflexus aurantiacus (strain ATCC 29366 / DSM 635 / J-10-fl)).